Reading from the N-terminus, the 278-residue chain is Biotin synthase (278 aa).

In terms of domain architecture, Radical SAM core spans methionine 1–arginine 227. [4Fe-4S] cluster is bound by residues cysteine 16, cysteine 20, and cysteine 23. 3 residues coordinate [2Fe-2S] cluster: cysteine 60, cysteine 95, and cysteine 153.

Belongs to the radical SAM superfamily. Biotin synthase family. In terms of assembly, homodimer. The cofactor is [4Fe-4S] cluster. [2Fe-2S] cluster is required as a cofactor.

The catalysed reaction is (4R,5S)-dethiobiotin + (sulfur carrier)-SH + 2 reduced [2Fe-2S]-[ferredoxin] + 2 S-adenosyl-L-methionine = (sulfur carrier)-H + biotin + 2 5'-deoxyadenosine + 2 L-methionine + 2 oxidized [2Fe-2S]-[ferredoxin]. It functions in the pathway cofactor biosynthesis; biotin biosynthesis; biotin from 7,8-diaminononanoate: step 2/2. Catalyzes the conversion of dethiobiotin (DTB) to biotin by the insertion of a sulfur atom into dethiobiotin via a radical-based mechanism. In Campylobacter jejuni subsp. doylei (strain ATCC BAA-1458 / RM4099 / 269.97), this protein is Biotin synthase.